Consider the following 213-residue polypeptide: uncharacterized protein (213 aa).

An N-terminal signal peptide occupies residues 1-19 (MKKVLLLLFVLTIGLALSA). Residue cysteine 20 is the site of N-palmitoyl cysteine attachment. Residue cysteine 20 is the site of S-diacylglycerol cysteine attachment. The tract at residues 20–62 (CSQSSDASEKEKPKEKKSQEELEKELDKELKKGGEPKTKKDDQ) is disordered. Residues 26–62 (ASEKEKPKEKKSQEELEKELDKELKKGGEPKTKKDDQ) are compositionally biased toward basic and acidic residues.

The protein resides in the cell membrane. This is an uncharacterized protein from Bacillus subtilis (strain 168).